A 686-amino-acid chain; its full sequence is Delta-like protein 4 (686 aa).

The first 26 residues, 1 to 26 (MTPASRSACRWALLLLAVLWPQQRAA), serve as a signal peptide directing secretion. Residues 27–532 (GSGIFQLRLQ…GLPPSFPWVA (506 aa)) lie on the Extracellular side of the membrane. Intrachain disulfides connect cysteine 51–cysteine 55 and cysteine 62–cysteine 75. Residues asparagine 79, asparagine 109, and asparagine 162 are each glycosylated (N-linked (GlcNAc...) asparagine). The DSL domain occupies 174 to 218 (VICSDNYYGESCSRLCKKRDDHFGHYECQPDGSLSCLPGWTGKYC). The cysteines at positions 176 and 185 are disulfide-linked. 2 interaction with Notch1 regions span residues 186 to 188 (SRL) and 192 to 196 (RDDHF). Disulfide bonds link cysteine 189–cysteine 201, cysteine 209–cysteine 218, cysteine 223–cysteine 234, cysteine 227–cysteine 240, cysteine 242–cysteine 251, cysteine 254–cysteine 265, cysteine 260–cysteine 271, cysteine 273–cysteine 282, cysteine 289–cysteine 301, cysteine 295–cysteine 311, cysteine 313–cysteine 322, cysteine 329–cysteine 340, cysteine 334–cysteine 349, cysteine 351–cysteine 360, cysteine 367–cysteine 378, cysteine 372–cysteine 389, cysteine 391–cysteine 400, cysteine 407–cysteine 418, cysteine 412–cysteine 427, cysteine 429–cysteine 438, cysteine 445–cysteine 456, cysteine 450–cysteine 465, cysteine 467–cysteine 476, cysteine 485–cysteine 496, cysteine 490–cysteine 507, and cysteine 509–cysteine 518. EGF-like domains are found at residues 219-252 (DQPI…RLCN), 253-283 (ECIP…LFCD), 285-323 (DLNY…EHCE), 325-361 (GLSK…QHCE), 364-401 (TLTC…SNCE), 403-439 (KVDR…THCE), 441-477 (HISD…RRCE), and 481-519 (THDA…SRCE). Asparagine 297 is a glycosylation site (N-linked (GlcNAc...) asparagine). N-linked (GlcNAc...) asparagine glycosylation is present at asparagine 394. Residues 533 to 553 (VSLGVGLVVLLVLLVMVVVAV) traverse the membrane as a helical segment. The Cytoplasmic segment spans residues 554 to 686 (RQLRLRRPDD…RNECVIATEV (133 aa)).

As to quaternary structure, interacts with NOTCH4. Interacts (via N-terminal DSL and MNNL domains) with NOTCH1 (via EGF-like domains). As to expression, expressed in vascular endothelium. Expressed in retina at least during embryogenesis.

It localises to the cell membrane. Its function is as follows. Involved in the Notch signaling pathway as Notch ligand. Activates NOTCH1 and NOTCH4. Involved in angiogenesis; negatively regulates endothelial cell proliferation and migration and angiogenic sprouting. Essential for retinal progenitor proliferation. Required for suppressing rod fates in late retinal progenitors as well as for proper generation of other retinal cell types. During spinal cord neurogenesis, inhibits V2a interneuron fate. The polypeptide is Delta-like protein 4 (Dll4) (Mus musculus (Mouse)).